A 258-amino-acid chain; its full sequence is UPF0246 protein ACIAD2218 (258 aa).

It belongs to the UPF0246 family.

The polypeptide is UPF0246 protein ACIAD2218 (Acinetobacter baylyi (strain ATCC 33305 / BD413 / ADP1)).